A 371-amino-acid polypeptide reads, in one-letter code: Peptidyl-prolyl cis-trans isomerase D (371 aa).

The PPIase cyclophilin-type domain occupies 8–172 (FFDIAIGGQL…EPVVIADCGQ (165 aa)). Residues 175-202 (SDDPFLAERTSTDGDPYEDYPDDEDQEL) are disordered. A compositionally biased stretch (acidic residues) spans 189–201 (DPYEDYPDDEDQE). TPR repeat units follow at residues 212–245 (AKTI…LDVH), 265–303 (APLL…LELS), and 308–341 (AKAY…LPED).

It belongs to the cyclophilin-type PPIase family. PPIase D subfamily.

It is found in the cytoplasm. The catalysed reaction is [protein]-peptidylproline (omega=180) = [protein]-peptidylproline (omega=0). PPIases accelerate the folding of proteins. It catalyzes the cis-trans isomerization of proline imidic peptide bonds in oligopeptides. In Amanita muscaria (Fly agaric), this protein is Peptidyl-prolyl cis-trans isomerase D (Cyp40).